The chain runs to 226 residues: ATP synthase F(0) complex subunit a (226 aa).

A run of 6 helical transmembrane segments spans residues 12–32 (PTMM…ILFP), 68–88 (WTLM…LGLL), 97–117 (QLSM…VTGF), 138–158 (IPML…ALAV), 164–184 (ITAG…LMSI), and 189–209 (ASIT…VALI).

It belongs to the ATPase A chain family. In terms of assembly, component of the ATP synthase complex composed at least of ATP5F1A/subunit alpha, ATP5F1B/subunit beta, ATP5MC1/subunit c (homooctomer), MT-ATP6/subunit a, MT-ATP8/subunit 8, ATP5ME/subunit e, ATP5MF/subunit f, ATP5MG/subunit g, ATP5MK/subunit k, ATP5MJ/subunit j, ATP5F1C/subunit gamma, ATP5F1D/subunit delta, ATP5F1E/subunit epsilon, ATP5PF/subunit F6, ATP5PB/subunit b, ATP5PD/subunit d, ATP5PO/subunit OSCP. ATP synthase complex consists of a soluble F(1) head domain (subunits alpha(3) and beta(3)) - the catalytic core - and a membrane F(0) domain - the membrane proton channel (subunits c, a, 8, e, f, g, k and j). These two domains are linked by a central stalk (subunits gamma, delta, and epsilon) rotating inside the F1 region and a stationary peripheral stalk (subunits F6, b, d, and OSCP). Interacts with DNAJC30; interaction is direct.

The protein localises to the mitochondrion inner membrane. It carries out the reaction H(+)(in) = H(+)(out). Subunit a, of the mitochondrial membrane ATP synthase complex (F(1)F(0) ATP synthase or Complex V) that produces ATP from ADP in the presence of a proton gradient across the membrane which is generated by electron transport complexes of the respiratory chain. ATP synthase complex consist of a soluble F(1) head domain - the catalytic core - and a membrane F(1) domain - the membrane proton channel. These two domains are linked by a central stalk rotating inside the F(1) region and a stationary peripheral stalk. During catalysis, ATP synthesis in the catalytic domain of F(1) is coupled via a rotary mechanism of the central stalk subunits to proton translocation. With the subunit c (ATP5MC1), forms the proton-conducting channel in the F(0) domain, that contains two crucial half-channels (inlet and outlet) that facilitate proton movement from the mitochondrial intermembrane space (IMS) into the matrix. Protons are taken up via the inlet half-channel and released through the outlet half-channel, following a Grotthuss mechanism. The sequence is that of ATP synthase F(0) complex subunit a from Dasypus novemcinctus (Nine-banded armadillo).